We begin with the raw amino-acid sequence, 206 residues long: Large ribosomal subunit protein uL4 (206 aa).

The tract at residues 62-85 (KPWRQKGTGRARQGSTRSPQFRGG) is disordered.

It belongs to the universal ribosomal protein uL4 family. As to quaternary structure, part of the 50S ribosomal subunit.

Its function is as follows. One of the primary rRNA binding proteins, this protein initially binds near the 5'-end of the 23S rRNA. It is important during the early stages of 50S assembly. It makes multiple contacts with different domains of the 23S rRNA in the assembled 50S subunit and ribosome. Forms part of the polypeptide exit tunnel. The protein is Large ribosomal subunit protein uL4 of Rhodospirillum centenum (strain ATCC 51521 / SW).